A 146-amino-acid chain; its full sequence is Large ribosomal subunit protein uL13 (146 aa).

This sequence belongs to the universal ribosomal protein uL13 family. As to quaternary structure, part of the 50S ribosomal subunit.

This protein is one of the early assembly proteins of the 50S ribosomal subunit, although it is not seen to bind rRNA by itself. It is important during the early stages of 50S assembly. This chain is Large ribosomal subunit protein uL13, found in Mycoplasma pneumoniae (strain ATCC 29342 / M129 / Subtype 1) (Mycoplasmoides pneumoniae).